A 257-amino-acid polypeptide reads, in one-letter code: Diphthine synthase (257 aa).

S-adenosyl-L-methionine contacts are provided by residues Ile-11, Asp-89, Ile-92, 117–118 (SV), Leu-169, Leu-210, and His-235.

This sequence belongs to the diphthine synthase family. As to quaternary structure, homodimer.

It carries out the reaction 2-[(3S)-amino-3-carboxypropyl]-L-histidyl-[translation elongation factor 2] + 3 S-adenosyl-L-methionine = diphthine-[translation elongation factor 2] + 3 S-adenosyl-L-homocysteine + 3 H(+). The protein operates within protein modification; peptidyl-diphthamide biosynthesis. Functionally, S-adenosyl-L-methionine-dependent methyltransferase that catalyzes the trimethylation of the amino group of the modified target histidine residue in translation elongation factor 2 (EF-2), to form an intermediate called diphthine. The three successive methylation reactions represent the second step of diphthamide biosynthesis. In Saccharolobus islandicus (strain L.S.2.15 / Lassen #1) (Sulfolobus islandicus), this protein is Diphthine synthase.